Consider the following 1176-residue polypeptide: MKNNFFKKTIILLIFLSIFILYSNADEETITTPPGYYGLKRIKRFPHSNIESNNISQTDADLYYPDICAGALPNAEGDLMTFYTFLDANLTLNKFLITKESIYSFMVHSLVILPGGSVTIKRGLLFFSLEEYNSLNIINPAKFPLDPMGYFPGILALGGSLTLIGNYPLIYSAQVLSKTTLRISPPFSSIPGDNINKLYQIKIFSDSNPLGSLCSIIMDSTRTIVNISGCPPIGNEKVMKVAFIKFTIDEMNTGISNRYSVKKIDESIGASIFITGDTKVHIENFFINGDGRTLNEEYNDHKLIFSPNNKNIVTDIIKGSNQRYRNSLYIEFSNNAVIKNCVIFEKDPRRSPIVFFASNVEFTSNIISSYSGSNLIAQFGTENIRSKNNHYFLVPYSRSLNTSAKSMDYGYEGGNGLYSLSPNIKSENDTFIGQLNIFNFNFISNRSSVTSFDRDCYAPCYNDSDSVLSSVQRPVDFYLINPKYFKISNITLFNSTIFNLFVANSNGNQPNTYTINGLVAIGPIVANLDSNFLILKDFIATENFKLDGSVKRLDIINSSIELPLTSKDIIKNVSSLSTNIQNSYLYYPSNDSVEQLKDQIYGSVITPYYYSSPITLDRIKIVSIYPNSPLQVISGLTFNIVIQFRLIYAFQDIIICIFTSDNDSIQNRTVDFNVLSNKCILPVSVGPNKEGSANVRVQIKNSLSSDYLYIIDFPQITVLKTYTFYSGWSMANPDLANQQFIVNGSLFQSGCQTKTDSNCTISENSNYVPNLPNVTSSDELNSLFSSGVTSLNSNEPVIITTAINSNSTISQIQLFFTHVPIDQHASLLSVYIDNQPVYVLEPLQSNQGPTFKNITFKYENTNSLEKINIAFTTRGDIYLTSMAIYSSNIFFIPPIIPDPTAIPDVPANENTLNLLTIVLPICSAVVVASSVMLGRLFYKKKFKKFKSADIENEMTTIEPIETSNSNIENKSESIATPQQRNEQKEIPNKIHPVLKSLVKPKIAPYTLISPLPPLETKTPEALNPHFNEIGCDPINENPEINSDEQIVLPVDTPQISPDSPQHSIPSSSPPPPPLPLPPSTSLKPLKLPIVDSFRTSSFMFRLERSNLIELSDPNNPLRFSSKILDFNLKGLKATLFKEYSNFLLISNISSSTIFVKVILPRDSRTGNVGYNVHEYF.

A signal peptide spans 1-25 (MKNNFFKKTIILLIFLSIFILYSNA). The Extracellular portion of the chain corresponds to 26-913 (DEETITTPPG…DVPANENTLN (888 aa)). A helical transmembrane segment spans residues 914-934 (LLTIVLPICSAVVVASSVMLG). At 935-1176 (RLFYKKKFKK…NVGYNVHEYF (242 aa)) the chain is on the cytoplasmic side. 2 stretches are compositionally biased toward low complexity: residues 965-974 (SNIENKSESI) and 1053-1066 (PQISPDSPQHSIPS). Disordered regions lie at residues 965 to 985 (SNIENKSESIATPQQRNEQKE) and 1050 to 1080 (VDTPQISPDSPQHSIPSSSPPPPPLPLPPST). Residues 1067–1078 (SSPPPPPLPLPP) are compositionally biased toward pro residues.

Belongs to the GDT family.

The protein resides in the membrane. The chain is Growth-differentiation transition protein 5 (gdt5) from Dictyostelium discoideum (Social amoeba).